The sequence spans 355 residues: MALRLLKLGATSASVRVVAAGAQRVRGIHSSVQCKLXYGMWRFLLGDKASKRLTEHSRVITVDGNICTGKGKLAKEIAEKLGFKHFPEAGIHYPDSITGDGKPLAADYNGNCSLEKFYDDPRSNDGNTYRLQSWLYSSRLLQYSDALEHLLTTGQGVVLERSIFSDFVFLDAMYNQGFIRKQCVDHYNEVKSVTICDYLPPHLVIYIDVPVPEVQRRIQKKGDPHEMKITSAYLQDIENAYKKTFLPEMSEKCEVLQYSAREAQDSKKVVEDIEYLKFDKGPWLKQDNRTLYHLRLLVQDKFEVLNYTSIPIFLPEVTIGAHQTDRVLHQFRELPGRKYSPGYNTEVGDKWIWLK.

Residues M1–K35 constitute a mitochondrion transit peptide. Phosphoserine; by PINK1 is present on S250. K285 carries the N6-succinyllysine modification.

The protein belongs to the complex I NDUFA10 subunit family. In terms of assembly, complex I is composed of 45 different subunits. This a component of the hydrophobic protein fraction. The cofactor is FAD. In terms of processing, phosphorylation at Ser-250 by PINK1 is required for the binding and/or reduction of the complex I substrate ubiquinone.

The protein localises to the mitochondrion matrix. Its function is as follows. Accessory subunit of the mitochondrial membrane respiratory chain NADH dehydrogenase (Complex I), that is believed not to be involved in catalysis. Complex I functions in the transfer of electrons from NADH to the respiratory chain. The immediate electron acceptor for the enzyme is believed to be ubiquinone. The protein is NADH dehydrogenase [ubiquinone] 1 alpha subcomplex subunit 10, mitochondrial (NDUFA10) of Pongo pygmaeus (Bornean orangutan).